A 146-amino-acid chain; its full sequence is uncharacterized protein (146 aa).

The region spanning 9–141 is the HTH marR-type domain; that stretch reads VADIEKSLRH…FEKSLMKLQH (133 aa). Residues 55 to 78 constitute a DNA-binding region (H-T-H motif); the sequence is IGELSGKMYLACSTTTDLIDRMQK.

This is an uncharacterized protein from Bacillus subtilis (strain 168).